The following is a 699-amino-acid chain: Methylcrotonoyl-CoA carboxylase subunit alpha, mitochondrial (699 aa).

The Biotin carboxylation domain occupies 30–475 (ITKILIANRG…ETGFIPIHRE (446 aa)). Lys-144, Glu-228, and His-263 together coordinate ATP. One can recognise an ATP-grasp domain in the interval 148–345 (KDIMIKAGVP…LVEWQLKVAE (198 aa)). The active site involves Arg-320. The Biotinyl-binding domain occupies 624–699 (KGADGVLGSL…EDKKTLAVIV (76 aa)). The residue at position 665 (Lys-665) is an N6-biotinyllysine.

In terms of assembly, probably a dodecamer composed of six biotin-containing alpha subunits and six beta subunits. Requires Mn(2+) as cofactor. It depends on biotin as a cofactor.

Its subcellular location is the mitochondrion matrix. It carries out the reaction 3-methylbut-2-enoyl-CoA + hydrogencarbonate + ATP = 3-methyl-(2E)-glutaconyl-CoA + ADP + phosphate + H(+). Its pathway is amino-acid degradation; L-leucine degradation; (S)-3-hydroxy-3-methylglutaryl-CoA from 3-isovaleryl-CoA: step 2/3. Functionally, biotin-attachment subunit of the 3-methylcrotonyl-CoA carboxylase, an enzyme that catalyzes the conversion of 3-methylcrotonyl-CoA to 3-methylglutaconyl-CoA, a critical step for leucine and isovaleric acid catabolism. This chain is Methylcrotonoyl-CoA carboxylase subunit alpha, mitochondrial (mccA), found in Dictyostelium discoideum (Social amoeba).